Reading from the N-terminus, the 185-residue chain is Ribosome-recycling factor (185 aa).

The protein belongs to the RRF family.

The protein localises to the cytoplasm. In terms of biological role, responsible for the release of ribosomes from messenger RNA at the termination of protein biosynthesis. May increase the efficiency of translation by recycling ribosomes from one round of translation to another. This is Ribosome-recycling factor from Campylobacter jejuni (strain RM1221).